Reading from the N-terminus, the 675-residue chain is Protein distal antenna (675 aa).

The HTH psq-type domain occupies 5-56 (TKGKRPLRHLTATDKIDAIQRIHDGESKASVARDIGVPESTLRGWCKNEEKL). A DNA-binding region (H-T-H motif) is located at residues 32–52 (KASVARDIGVPESTLRGWCKN). 5 disordered regions span residues 239–269 (QSLR…KNPS), 337–393 (LYSS…PEDT), 458–534 (LNII…SKCN), 546–596 (FQNP…AHKS), and 655–675 (ERQQ…RRRK). A compositionally biased stretch (low complexity) spans 339-368 (SSMPRPSSPQQSSSPPQQHQQVQHHPSTQT). Residues 369 to 384 (PTPPIVSTPQPTPPSS) are compositionally biased toward pro residues. Residues 469-478 (VKSEPEDLSN) show a composition bias toward basic and acidic residues. Residues 479–493 (HNHSSSNAAAVAAPA) are compositionally biased toward low complexity. The span at 499–508 (FNPSPSTSAK) shows a compositional bias: polar residues. Positions 513 to 528 (QEDDEEQAGPADDESP) are enriched in acidic residues. Residues 559 to 579 (NLSIRSNNSPRRRSVSPAVSN) are compositionally biased toward low complexity.

In terms of assembly, homomers. Interacts with itself, danr, ey and dac to form a complex (or complexes) containing the RD factors.

The protein localises to the nucleus. Its function is as follows. Probable transcription factor with a role in the retinal determination (RD) network. Contributes to differentiation of antenna-specific characteristics. The sequence is that of Protein distal antenna from Aedes aegypti (Yellowfever mosquito).